Consider the following 565-residue polypeptide: Deformed epidermal autoregulatory factor 1 homolog (565 aa).

Disordered stretches follow at residues 34–62 (GGEA…ETPR) and 162–190 (GLKG…KGGT). Pro residues predominate over residues 169-181 (PLTPGPQSPPTPL). Thr171 bears the Phosphothreonine mark. Position 176 is a phosphoserine (Ser176). Thr179 carries the phosphothreonine modification. Residues 193 to 273 (NWDPSVYDSE…QCLIQDGILN (81 aa)) enclose the SAND domain. The Nuclear localization signal motif lies at 301–316 (KRRKKENELPTTPVKK). The tract at residues 403–478 (IAPFPEAALP…QLKTLFEQAK (76 aa)) is interaction with LMO4. Thr432 bears the Phosphothreonine mark. At Ser448 the chain carries Phosphoserine. Cys504, Cys507, Cys515, Cys518, Cys524, Cys528, His536, and Cys540 together coordinate Zn(2+). The MYND-type zinc finger occupies 504-540 (CVNCGREAMSECTGCHKVNYCSTFCQRKDWKDHQHIC).

Homodimer. Isoform 1 and isoform 4 may form a heterodimer. Interacts with LMO2 and CLIM2. Interacts with LMO4; LMO4 blocks export from nucleus. May interact with the corepressors NCOR1 and NCRO2. Identified in a complex with the XRCC5 and XRCC6 heterodimer. Interacts (via the SAND domain) with the DNA-PK complex subunit XRCC6; the interaction is direct and may be inhibited by DNA-binding. In terms of processing, may be phosphorylated by DNA-PK complex in a DNA independent manner (in vitro). As to expression, expressed in various tissues and cells such as in peripheral mononuclear cells and hormone-secreting pituitary cells. Expression in pancreatic lymph nodes of patients with type 1 diabetes is 20 times higher than in healthy controls. Highly expressed in fetal and adult brain.

It is found in the nucleus. The protein resides in the cytoplasm. It localises to the secreted. Functionally, transcription factor that binds to sequence with multiple copies of 5'-TTC[CG]G-3' present in its own promoter and that of the HNRPA2B1 gene. Down-regulates transcription of these genes. Binds to the retinoic acid response element (RARE) 5'-AGGGTTCACCGAAAGTTCA-3'. Activates the proenkephalin gene independently of promoter binding, probably through protein-protein interaction. When secreted, behaves as an inhibitor of cell proliferation, by arresting cells in the G0 or G1 phase. Required for neural tube closure and skeletal patterning. Regulates epithelial cell proliferation and side-branching in the mammary gland. Controls the expression of peripheral tissue antigens in pancreatic lymph nodes. Isoform 1 displays greater transcriptional activity than isoform 4. Isoform 4 may inhibit transcriptional activity of isoform 1 by interacting with isoform 1 and retaining it in the cytoplasm. Transcriptional activator of EIF4G3. This is Deformed epidermal autoregulatory factor 1 homolog (DEAF1) from Homo sapiens (Human).